Consider the following 453-residue polypeptide: Plasticin (453 aa).

A head region spans residues 1 to 51 (MSHSTFSHLFSPHFGAPVYSPVSSRIGGRYVSSSVPTRSVDFRSRSSAPAP). The coil 1A stretch occupies residues 71-112 (FATRSNEKRELQELNDRFASFIEKVRHLEQQNSKLILELGQY). Positions 77–390 (EKRELQELND…KLLEGEENRI (314 aa)) constitute an IF rod domain. The segment at 113 to 126 (KDQHQGSTGRINEL) is linker 1. The coil 1B stretch occupies residues 127-222 (CQQEMRELRR…KMHDEEIQDV (96 aa)). The segment at 223–245 (QVSVQSQQMKMEVMETSSRPDLT) is linker 12. A coil 2 region spans residues 246–391 (GALRDIRAQY…LLEGEENRIV (146 aa)). The tract at residues 392–453 (VPIMKMPSMS…KKDSHGQGKD (62 aa)) is tail. The tract at residues 421–453 (IKTVETRDGEVVKESTKEKGRDEKKDSHGQGKD) is disordered. Residues 424–453 (VETRDGEVVKESTKEKGRDEKKDSHGQGKD) show a composition bias toward basic and acidic residues.

It belongs to the intermediate filament family. As to expression, optic nerve.

Functionally, type III neurofilament. In Carassius auratus (Goldfish), this protein is Plasticin.